The primary structure comprises 510 residues: Lysine-specific demethylase 4D (510 aa).

In terms of domain architecture, JmjN spans I15 to R57. A polyADP-ribosyl glutamic acid mark is found at E23 and E24. A 2-oxoglutarate-binding site is contributed by Y133. The 167-residue stretch at D143–C309 folds into the JmjC domain. Residues H189 and E191 each contribute to the Fe cation site. 2-oxoglutarate is bound by residues N199 and K207. C235 and H241 together coordinate Zn(2+). K242 lines the 2-oxoglutarate pocket. Residue H277 participates in Fe cation binding. Residues C307 and C309 each contribute to the Zn(2+) site. The tract at residues M397–P510 is disordered. Positions R461–P471 are enriched in basic and acidic residues.

It belongs to the JHDM3 histone demethylase family. Fe(2+) is required as a cofactor. Ubiquitinated via 'Lys-63'-linked ubiquitin chains. Deubiquitinated by USP14 with the help of TRIM14 leading to stabilization.

Its subcellular location is the nucleus. The catalysed reaction is N(6),N(6),N(6)-trimethyl-L-lysyl(9)-[histone H3] + 2 2-oxoglutarate + 2 O2 = N(6)-methyl-L-lysyl(9)-[histone H3] + 2 formaldehyde + 2 succinate + 2 CO2. Its function is as follows. Histone demethylase that specifically demethylates 'Lys-9' of histone H3, thereby playing a central role in histone code. Does not demethylate histone H3 'Lys-4', H3 'Lys-27', H3 'Lys-36' nor H4 'Lys-20'. Demethylates both di- and trimethylated H3 'Lys-9' residue, while it has no activity on monomethylated residues. Demethylation of Lys residue generates formaldehyde and succinate. The chain is Lysine-specific demethylase 4D (Kdm4d) from Rattus norvegicus (Rat).